Here is a 91-residue protein sequence, read N- to C-terminus: DNA-directed RNA polymerase subunit Rpo11 (91 aa).

The protein belongs to the archaeal Rpo11/eukaryotic RPB11/RPC19 RNA polymerase subunit family. In terms of assembly, part of the RNA polymerase complex.

The protein resides in the cytoplasm. It carries out the reaction RNA(n) + a ribonucleoside 5'-triphosphate = RNA(n+1) + diphosphate. In terms of biological role, DNA-dependent RNA polymerase (RNAP) catalyzes the transcription of DNA into RNA using the four ribonucleoside triphosphates as substrates. The protein is DNA-directed RNA polymerase subunit Rpo11 of Methanothrix thermoacetophila (strain DSM 6194 / JCM 14653 / NBRC 101360 / PT) (Methanosaeta thermophila).